The sequence spans 115 residues: Large ribosomal subunit protein bL20c (115 aa).

Belongs to the bacterial ribosomal protein bL20 family.

The protein resides in the plastid. It is found in the chloroplast. Binds directly to 23S ribosomal RNA and is necessary for the in vitro assembly process of the 50S ribosomal subunit. It is not involved in the protein synthesizing functions of that subunit. This is Large ribosomal subunit protein bL20c from Cycas taitungensis (Prince sago).